Here is a 166-residue protein sequence, read N- to C-terminus: Vasopressin-neurophysin 2-copeptin (166 aa).

A signal peptide spans 1 to 19 (MPDATLPACFLSLLAFTSA). A disulfide bridge connects residues Cys-20 and Cys-25. At Gly-28 the chain carries Glycine amide. Disulfide bonds link Cys-41–Cys-85, Cys-44–Cys-58, Cys-52–Cys-75, Cys-59–Cys-65, Cys-92–Cys-104, Cys-98–Cys-116, and Cys-105–Cys-110. Residue Asn-133 is glycosylated (N-linked (GlcNAc...) asparagine).

It belongs to the vasopressin/oxytocin family. As to quaternary structure, interacts with vasopressin receptors V1bR/AVPR1B (Ki=85 pM), V1aR/AVPR1A (Ki=0.6 nM) and V2R/AVPR2 (Ki=4.9 nM). Interacts with oxytocin receptor (OXTR) (Ki=110 nM).

The protein localises to the secreted. Functionally, neurophysin 2 specifically binds vasopressin. Its function is as follows. Vasopressin has a direct antidiuretic action on the kidney, it also causes vasoconstriction of the peripheral vessels. Acts by binding to vasopressin receptors (V1bR/AVPR1B, V1aR/AVPR1A, and V2R/AVPR2). This chain is Vasopressin-neurophysin 2-copeptin (AVP), found in Bos taurus (Bovine).